The sequence spans 406 residues: Cysteine desulfurase (406 aa).

Residue Lys-226 is modified to N6-(pyridoxal phosphate)lysine. Cys-364 acts as the Cysteine persulfide intermediate in catalysis.

The protein belongs to the class-V pyridoxal-phosphate-dependent aminotransferase family. Csd subfamily. In terms of assembly, homodimer. Interacts with SufE and the SufBCD complex composed of SufB, SufC and SufD. The interaction with SufE is required to mediate the direct transfer of the sulfur atom from the S-sulfanylcysteine. It depends on pyridoxal 5'-phosphate as a cofactor.

It localises to the cytoplasm. The enzyme catalyses (sulfur carrier)-H + L-cysteine = (sulfur carrier)-SH + L-alanine. It carries out the reaction L-selenocysteine + AH2 = hydrogenselenide + L-alanine + A + H(+). Its pathway is cofactor biosynthesis; iron-sulfur cluster biosynthesis. Cysteine desulfurases mobilize the sulfur from L-cysteine to yield L-alanine, an essential step in sulfur metabolism for biosynthesis of a variety of sulfur-containing biomolecules. Component of the suf operon, which is activated and required under specific conditions such as oxidative stress and iron limitation. Acts as a potent selenocysteine lyase in vitro, that mobilizes selenium from L-selenocysteine. Selenocysteine lyase activity is however unsure in vivo. This Salmonella gallinarum (strain 287/91 / NCTC 13346) protein is Cysteine desulfurase.